Reading from the N-terminus, the 72-residue chain is Translation initiation factor IF-1 (72 aa).

An S1-like domain is found at 1–72 (MAKEEVLEFP…TKGRITYRLK (72 aa)).

This sequence belongs to the IF-1 family. Component of the 30S ribosomal translation pre-initiation complex which assembles on the 30S ribosome in the order IF-2 and IF-3, IF-1 and N-formylmethionyl-tRNA(fMet); mRNA recruitment can occur at any time during PIC assembly.

The protein localises to the cytoplasm. Functionally, one of the essential components for the initiation of protein synthesis. Stabilizes the binding of IF-2 and IF-3 on the 30S subunit to which N-formylmethionyl-tRNA(fMet) subsequently binds. Helps modulate mRNA selection, yielding the 30S pre-initiation complex (PIC). Upon addition of the 50S ribosomal subunit IF-1, IF-2 and IF-3 are released leaving the mature 70S translation initiation complex. The polypeptide is Translation initiation factor IF-1 (Brucella suis biovar 1 (strain 1330)).